Consider the following 129-residue polypeptide: Small ribosomal subunit protein uS12 (129 aa).

This sequence belongs to the universal ribosomal protein uS12 family. As to quaternary structure, part of the 30S ribosomal subunit. Contacts proteins S8 and S17. May interact with IF1 in the 30S initiation complex.

With S4 and S5 plays an important role in translational accuracy. Functionally, interacts with and stabilizes bases of the 16S rRNA that are involved in tRNA selection in the A site and with the mRNA backbone. Located at the interface of the 30S and 50S subunits, it traverses the body of the 30S subunit contacting proteins on the other side and probably holding the rRNA structure together. The combined cluster of proteins S8, S12 and S17 appears to hold together the shoulder and platform of the 30S subunit. This Rickettsia typhi (strain ATCC VR-144 / Wilmington) protein is Small ribosomal subunit protein uS12.